A 213-amino-acid chain; its full sequence is ATP phosphoribosyltransferase (213 aa).

Belongs to the ATP phosphoribosyltransferase family. Short subfamily. Heteromultimer composed of HisG and HisZ subunits.

It is found in the cytoplasm. The enzyme catalyses 1-(5-phospho-beta-D-ribosyl)-ATP + diphosphate = 5-phospho-alpha-D-ribose 1-diphosphate + ATP. The protein operates within amino-acid biosynthesis; L-histidine biosynthesis; L-histidine from 5-phospho-alpha-D-ribose 1-diphosphate: step 1/9. Its function is as follows. Catalyzes the condensation of ATP and 5-phosphoribose 1-diphosphate to form N'-(5'-phosphoribosyl)-ATP (PR-ATP). Has a crucial role in the pathway because the rate of histidine biosynthesis seems to be controlled primarily by regulation of HisG enzymatic activity. The protein is ATP phosphoribosyltransferase of Nitrosococcus oceani (strain ATCC 19707 / BCRC 17464 / JCM 30415 / NCIMB 11848 / C-107).